Consider the following 334-residue polypeptide: Glucokinase-like protein XF_1460 (334 aa).

Position 18–23 (18–23 (ADVGGT)) interacts with ATP.

Belongs to the bacterial glucokinase family.

The chain is Glucokinase-like protein XF_1460 from Xylella fastidiosa (strain 9a5c).